We begin with the raw amino-acid sequence, 357 residues long: S-adenosyl-L-methionine:benzoic acid/salicylic acid carboxyl methyltransferase 1 (357 aa).

Residue Tyr18 coordinates S-adenosyl-L-homocysteine. Residue Gln25 participates in benzoate binding. Positions 59, 64, 96, 97, 135, and 136 each coordinate S-adenosyl-L-homocysteine. Trp157 provides a ligand contact to benzoate. Positions 168, 254, 256, and 257 each coordinate Mg(2+). Benzoate is bound at residue Gln260.

This sequence belongs to the methyltransferase superfamily. Type-7 methyltransferase family. Predominantly expressed in petal limbs and tubes of corollas.

It catalyses the reaction benzoate + S-adenosyl-L-methionine = methyl benzoate + S-adenosyl-L-homocysteine. It carries out the reaction salicylate + S-adenosyl-L-methionine = methyl salicylate + S-adenosyl-L-homocysteine. Its pathway is aromatic compound metabolism. Converts benzoic acid into the volatile ester methyl benzoates. This scent, mostly produced in a rhythmical, diurnal manner, attracts the pollinators. The chain is S-adenosyl-L-methionine:benzoic acid/salicylic acid carboxyl methyltransferase 1 from Petunia hybrida (Petunia).